Here is a 122-residue protein sequence, read N- to C-terminus: Large ribosomal subunit protein uL14 (122 aa).

This sequence belongs to the universal ribosomal protein uL14 family. In terms of assembly, part of the 50S ribosomal subunit. Forms a cluster with proteins L3 and L19. In the 70S ribosome, L14 and L19 interact and together make contacts with the 16S rRNA in bridges B5 and B8.

In terms of biological role, binds to 23S rRNA. Forms part of two intersubunit bridges in the 70S ribosome. The protein is Large ribosomal subunit protein uL14 of Rhizobium meliloti (strain 1021) (Ensifer meliloti).